We begin with the raw amino-acid sequence, 220 residues long: Deoxyribose-phosphate aldolase 1 (220 aa).

Residue Asp89 is the Proton donor/acceptor of the active site. Lys151 serves as the catalytic Schiff-base intermediate with acetaldehyde. Catalysis depends on Lys180, which acts as the Proton donor/acceptor.

It belongs to the DeoC/FbaB aldolase family. DeoC type 1 subfamily.

It is found in the cytoplasm. It carries out the reaction 2-deoxy-D-ribose 5-phosphate = D-glyceraldehyde 3-phosphate + acetaldehyde. It participates in carbohydrate degradation; 2-deoxy-D-ribose 1-phosphate degradation; D-glyceraldehyde 3-phosphate and acetaldehyde from 2-deoxy-alpha-D-ribose 1-phosphate: step 2/2. Its function is as follows. Catalyzes a reversible aldol reaction between acetaldehyde and D-glyceraldehyde 3-phosphate to generate 2-deoxy-D-ribose 5-phosphate. The protein is Deoxyribose-phosphate aldolase 1 of Staphylococcus aureus (strain COL).